Consider the following 238-residue polypeptide: UPF0328 protein ECU07_0010 (238 aa).

Disordered stretches follow at residues 1–154 (MAAP…NTQR) and 211–238 (GRLH…LATL). Basic and acidic residues predominate over residues 106-128 (HTEGCHTHEANPEPNTKHTETES). The segment covering 129-152 (PKPQTSTQHHTPITIPSSLLSQNT) has biased composition (polar residues).

Belongs to the UPF0328 family.

This chain is UPF0328 protein ECU07_0010, found in Encephalitozoon cuniculi (strain GB-M1) (Microsporidian parasite).